A 144-amino-acid chain; its full sequence is UPF0102 protein BURPS668_3819 (144 aa).

The interval 1-28 (MCHAREASLGTGEPEAAPRDNFPREAGS) is disordered. Basic and acidic residues predominate over residues 16–28 (AAPRDNFPREAGS).

The protein belongs to the UPF0102 family.

This chain is UPF0102 protein BURPS668_3819, found in Burkholderia pseudomallei (strain 668).